The sequence spans 440 residues: Streptokinase A (440 aa).

The N-terminal stretch at 1–26 (MKNYLSIGVIALLFALTFGTVKSVQA) is a signal peptide.

Functionally, this protein is not a protease, but it activates plasminogen by complexing with it. As a potential virulence factor, it is thought to prevent the formation of effective fibrin barriers around the site of infection, thereby contributing to the invasiveness of the cells. This chain is Streptokinase A (ska), found in Streptococcus pyogenes serotype M1.